The chain runs to 93 residues: MKFAVILLFTLVVLAVASESVEEDTREIDVEEFQEQQRGCADLRQPCTKGDDCSCCGSDGVCNCEHLHKTGCFCKTAGPYEKLKKWFKRCPKY.

Positions 1-18 (MKFAVILLFTLVVLAVAS) are cleaved as a signal peptide. Positions 19-38 (ESVEEDTREIDVEEFQEQQR) are excised as a propeptide.

The protein belongs to the neurotoxin 31 family. Post-translationally, contains 5 disulfide bonds. In terms of tissue distribution, expressed by the venom gland.

Its subcellular location is the secreted. In Lycosa singoriensis (Wolf spider), this protein is U12-lycotoxin-Ls1e.